Consider the following 440-residue polypeptide: Xylose isomerase (440 aa).

Active-site residues include H100 and D103. Positions 231, 267, 270, 295, 306, 308, and 338 each coordinate Mg(2+).

It belongs to the xylose isomerase family. As to quaternary structure, homotetramer. The cofactor is Mg(2+).

It is found in the cytoplasm. It carries out the reaction alpha-D-xylose = alpha-D-xylulofuranose. The chain is Xylose isomerase from Burkholderia multivorans (strain ATCC 17616 / 249).